The sequence spans 261 residues: UPF0246 protein PMI0005 (261 aa).

It belongs to the UPF0246 family.

This chain is UPF0246 protein PMI0005, found in Proteus mirabilis (strain HI4320).